Here is a 256-residue protein sequence, read N- to C-terminus: Small ribosomal subunit protein uS3 (256 aa).

Residues 39 to 111 (IREFLNENFS…EVILNIIEVR (73 aa)) form the KH type-2 domain. The tract at residues 219–256 (DTRKPFEAGNQKRGQKRRPRNDQPGQRPQQRNRNSKED) is disordered. Over residues 240–250 (DQPGQRPQQRN) the composition is skewed to low complexity.

It belongs to the universal ribosomal protein uS3 family. In terms of assembly, part of the 30S ribosomal subunit. Forms a tight complex with proteins S10 and S14.

In terms of biological role, binds the lower part of the 30S subunit head. Binds mRNA in the 70S ribosome, positioning it for translation. This is Small ribosomal subunit protein uS3 from Acholeplasma laidlawii (strain PG-8A).